The following is a 391-amino-acid chain: Multidrug resistance protein MdtL (391 aa).

A run of 12 helical transmembrane segments spans residues Phe-4–Val-24, Ile-42–Ala-62, Pro-69–Glu-89, Leu-93–Phe-113, Leu-131–Met-151, Ser-158–Leu-178, Phe-203–Val-222, Ala-245–Phe-265, Thr-269–Pro-289, Val-293–Met-313, Leu-331–Ile-351, and Met-356–Ala-376.

Belongs to the major facilitator superfamily. DHA1 family. MdtL (TC 2.A.1.2.22) subfamily.

It localises to the cell inner membrane. In terms of biological role, confers resistance to chloramphenicol. In Escherichia coli O45:K1 (strain S88 / ExPEC), this protein is Multidrug resistance protein MdtL.